Consider the following 351-residue polypeptide: Blue-sensitive opsin (351 aa).

Over 1 to 40 (MKQVPEFHEDFYIPIPLDINNLSAYSPFLVPQDHLGNQGI) the chain is Extracellular. Asn21 is a glycosylation site (N-linked (GlcNAc...) asparagine). The helical transmembrane segment at 41-65 (FMAMSVFMFFIFIGGASINILTILC) threads the bilayer. The Cytoplasmic portion of the chain corresponds to 66-77 (TIQFKKLRSHLN). Residues 78 to 103 (YILVNLSIANLFVAIFGSPLSFYSFF) form a helical membrane-spanning segment. Topologically, residues 104–117 (NRYFIFGATACKIE) are extracellular. A disulfide bridge connects residues Cys114 and Cys191. Residues 118 to 137 (GFLATLGGMVGLWSLAVVAF) traverse the membrane as a helical segment. Over 138–156 (ERWLVICKPLGNFTFKTPH) the chain is Cytoplasmic. A helical transmembrane segment spans residues 157-180 (AIAGCILPWISALAASLPPLFGWS). Residues 181-206 (RYIPEGLQCSCGPDWYTTNNKYNNES) lie on the Extracellular side of the membrane. Residues 207–234 (YVMFLFCFCFAVPFGTIVFCYGQLLITL) traverse the membrane as a helical segment. The Cytoplasmic portion of the chain corresponds to 235–256 (KLAAKAQADSASTQKAEREVTK). A helical membrane pass occupies residues 257–280 (MVVVMVLGFLVCWAPYASFSLWIV). The Extracellular segment spans residues 281-288 (SHRGEEFD). Residues 289-313 (LRMATIPSCLSKASTVYNPVIYVLM) form a helical membrane-spanning segment. The residue at position 300 (Lys300) is an N6-(retinylidene)lysine. Topologically, residues 314-351 (NKQFRSCMMKMVCGKNIEEDEASTSSQVTQVSSVAPEK) are cytoplasmic.

It belongs to the G-protein coupled receptor 1 family. Opsin subfamily. Post-translationally, phosphorylated on some or all of the serine and threonine residues present in the C-terminal region. The color pigments are found in the cone photoreceptor cells.

Its subcellular location is the membrane. In terms of biological role, visual pigments are the light-absorbing molecules that mediate vision. They consist of an apoprotein, opsin, covalently linked to cis-retinal. This chain is Blue-sensitive opsin, found in Carassius auratus (Goldfish).